The sequence spans 450 residues: 3-phosphoshikimate 1-carboxyvinyltransferase (450 aa).

Positions 23, 24, and 28 each coordinate 3-phosphoshikimate. K23 serves as a coordination point for phosphoenolpyruvate. Residues G96 and R124 each coordinate phosphoenolpyruvate. 3-phosphoshikimate is bound by residues S167, S168, Q169, S196, E311, and H340. A phosphoenolpyruvate-binding site is contributed by Q169. Catalysis depends on E311, which acts as the Proton acceptor. Phosphoenolpyruvate is bound by residues R344, R385, and K410. Residues 426-450 (GQGWGYPQPRSGQRARRATGQGSGG) are disordered.

It belongs to the EPSP synthase family. As to quaternary structure, monomer.

The protein localises to the cytoplasm. It carries out the reaction 3-phosphoshikimate + phosphoenolpyruvate = 5-O-(1-carboxyvinyl)-3-phosphoshikimate + phosphate. The protein operates within metabolic intermediate biosynthesis; chorismate biosynthesis; chorismate from D-erythrose 4-phosphate and phosphoenolpyruvate: step 6/7. Its function is as follows. Catalyzes the transfer of the enolpyruvyl moiety of phosphoenolpyruvate (PEP) to the 5-hydroxyl of shikimate-3-phosphate (S3P) to produce enolpyruvyl shikimate-3-phosphate and inorganic phosphate. This is 3-phosphoshikimate 1-carboxyvinyltransferase from Mycobacterium bovis (strain ATCC BAA-935 / AF2122/97).